The following is a 207-amino-acid chain: Large ribosomal subunit protein uL3c (207 aa).

The interval 128–148 (FTRGPMTHGSKNHRAPGSIGM) is disordered.

It belongs to the universal ribosomal protein uL3 family. Part of the 50S ribosomal subunit.

The protein localises to the plastid. Its subcellular location is the chloroplast. Its function is as follows. One of the primary rRNA binding proteins, it binds directly near the 3'-end of the 23S rRNA, where it nucleates assembly of the 50S subunit. The protein is Large ribosomal subunit protein uL3c (rpl3) of Trieres chinensis (Marine centric diatom).